A 278-amino-acid chain; its full sequence is Transmembrane protein 45B (278 aa).

7 helical membrane passes run 7-27 (HALPGSFFLIFGLWWSVKYPL), 49-69 (IIEGAVKALFAVIGILAEQFV), 95-115 (YLFFGVSGIIDMLTYLYFNIV), 117-137 (LGLDRVVLAMAVFVEGFLFYF), 149-169 (IHSLLLFSLFGATISICLEVI), 183-203 (LLILQGTWFWQIGFVLFPPFG), and 215-235 (VMFITMCFCWHYLVALCITAI). 2 positions are modified to phosphoserine: serine 273 and serine 275.

This sequence belongs to the TMEM45 family.

Its subcellular location is the endosome membrane. The protein localises to the lysosome membrane. It localises to the golgi apparatus. The protein resides in the trans-Golgi network membrane. Functionally, plays a role in innate immunity. This Rattus norvegicus (Rat) protein is Transmembrane protein 45B (Tmem45b).